A 179-amino-acid polypeptide reads, in one-letter code: uncharacterized protein (179 aa).

This is an uncharacterized protein from Acanthamoeba polyphaga mimivirus (APMV).